Here is a 618-residue protein sequence, read N- to C-terminus: Neurosecretory protein VGF (618 aa).

The first 23 residues, 1–23 (MKSLRLPATVLFCLLLLIKGLGA), serve as a signal peptide directing secretion. 3 disordered regions span residues 23 to 46 (AAPP…PVAG), 86 to 201 (VLLQ…LESP), and 219 to 262 (PERA…GEAL). Positions 26–37 (PGHPEAQPPPPS) are enriched in pro residues. Residues 180–195 (ETAAAETETRTHTLTR) show a composition bias toward low complexity. Residues 301 to 332 (LAQVEAGRRQAEATRQAAAQEERLADLASDLL) adopt a coiled-coil conformation. Residue glutamine 310 is modified to Pyrrolidone carboxylic acid. The disordered stretch occupies residues 342–603 (RQRGLGGRGL…EAEERRLQEQ (262 aa)). Residues 356-378 (GGGRETARQQEEAEQERRGGEER) are compositionally biased toward basic and acidic residues. Over residues 379 to 395 (VGEEDEEAAEAEAEAEE) the composition is skewed to acidic residues. The span at 416–434 (AEDKRSREETPGHRRKEAE) shows a compositional bias: basic and acidic residues. Serine 421 is modified (phosphoserine). At threonine 425 the chain carries Phosphothreonine. Acidic residues predominate over residues 435–451 (GAEEGGAEDEDDDEEMD). Over residues 490–500 (PPEPVPPPRAA) the composition is skewed to pro residues. The span at 578–602 (HYPDREAQARRAQEEAEAEERRLQE) shows a compositional bias: basic and acidic residues.

Post-translationally, multiple peptides are derived from VGF, with activities in synaptic plasticity, antidepression, penile erection, autonomic activation, and increases in energy expenditure.

It is found in the secreted. The protein localises to the cytoplasmic vesicle. It localises to the secretory vesicle. Functionally, secreted polyprotein that is packaged and proteolytically processed by prohormone convertases PCSK1 and PCSK2 in a cell-type-specific manner. VGF and peptides derived from its processing play many roles in neurogenesis and neuroplasticity associated with learning, memory, depression and chronic pain. Its function is as follows. Plays a role in the control of body fluid homeostasis by regulating vasopressin release. Suppresses presynaptic glutamatergic neurons connected to vasopressin neurons. In terms of biological role, plays a role in the control of body fluid homeostasis by regulating vasopressin release. Activates GABAergic interneurons which are inhibitory neurons of the nervous system and thereby suppresses presynaptic glutamatergic neurons. Also stimulates feeding behavior in an orexin-dependent manner in the hypothalamus. Functions as a positive regulator for the activation of orexin neurons resulting in elevated gastric acid secretion and gastric emptying. This chain is Neurosecretory protein VGF, found in Bos taurus (Bovine).